Reading from the N-terminus, the 58-residue chain is MNFSKIFIFVVLAVLLLCSQTEAGRLKKLGKKIEGAGKRVFKAAEKALPVVAGVKALG.

A signal peptide spans methionine 1–alanine 23. Residue leucine 57 is modified to Leucine amide.

This sequence belongs to the cecropin family. In terms of tissue distribution, relatively abundant in head, thorax and to a lesser extent in abdominal carcass and anterior midgut.

The protein resides in the secreted. In terms of biological role, antibacterial activity against several Gram-positive and Gram-negative bacteria. Antifungal activity against A.fumigatus, B.cinerea, F.culmorum, F.oxysporum, N.crassa, C.albicans, C.neoformans and S.cerevisiae. This is Cecropin-A (CecA) from Anopheles gambiae (African malaria mosquito).